A 431-amino-acid polypeptide reads, in one-letter code: Enolase (431 aa).

(2R)-2-phosphoglycerate is bound at residue glutamine 166. Glutamate 208 acts as the Proton donor in catalysis. Positions 245, 288, and 315 each coordinate Mg(2+). Residues lysine 340, arginine 369, serine 370, and lysine 391 each coordinate (2R)-2-phosphoglycerate. Catalysis depends on lysine 340, which acts as the Proton acceptor.

This sequence belongs to the enolase family. Requires Mg(2+) as cofactor.

It is found in the cytoplasm. The protein localises to the secreted. It localises to the cell surface. It catalyses the reaction (2R)-2-phosphoglycerate = phosphoenolpyruvate + H2O. It functions in the pathway carbohydrate degradation; glycolysis; pyruvate from D-glyceraldehyde 3-phosphate: step 4/5. In terms of biological role, catalyzes the reversible conversion of 2-phosphoglycerate (2-PG) into phosphoenolpyruvate (PEP). It is essential for the degradation of carbohydrates via glycolysis. In Clostridium botulinum (strain Okra / Type B1), this protein is Enolase.